The chain runs to 561 residues: Cytosolic purine 5'-nucleotidase (561 aa).

The active-site Nucleophile is the Asp52. GMP is bound by residues Asp52 and Asp54. The IMP site is built by Asp52 and Asp54. Positions 52 and 54 each coordinate Mg(2+). Catalysis depends on Asp54, which acts as the Proton donor. Arg144 contributes to the (2R)-2,3-bisphosphoglycerate binding site. Residues Arg144 and Asn154 each coordinate ATP. Residues Arg144 and Asn154 each coordinate dATP. Position 154 (Asn154) interacts with adenosine. A P(1),P(4)-bis(5'-adenosyl) tetraphosphate-binding site is contributed by Asn154. Arg202, Asp206, Lys215, Thr249, and Asn250 together coordinate GMP. The IMP site is built by Arg202, Asp206, Lys215, Thr249, Asn250, Ser251, and Lys292. Lys292 is a binding site for GMP. Residue Asp351 participates in Mg(2+) binding. Residue Lys362 coordinates (2R)-2,3-bisphosphoglycerate. A P(1),P(4)-bis(5'-adenosyl) tetraphosphate-binding site is contributed by Lys362. Position 418 is a phosphoserine (Ser418). Adenosine-binding residues include Met436 and Gln453. Residues Gln453 and Arg456 each contribute to the ATP site. DATP-binding residues include Gln453 and Arg456. Gln453 is a P(1),P(4)-bis(5'-adenosyl) tetraphosphate binding site. Tyr457 lines the (2R)-2,3-bisphosphoglycerate pocket. Residue Tyr457 coordinates P(1),P(4)-bis(5'-adenosyl) tetraphosphate. Phosphoserine occurs at positions 502, 511, and 527. The disordered stretch occupies residues 538–561 (PLAPQEITHCHDEDDDEEEEEEEE). The required for tetramer assembly stretch occupies residues 548 to 561 (HDEDDDEEEEEEEE). Positions 550–561 (EDDDEEEEEEEE) are enriched in acidic residues.

This sequence belongs to the 5'(3')-deoxyribonucleotidase family. In terms of assembly, homotetramer. Mg(2+) serves as cofactor. Widely expressed.

The protein localises to the cytoplasm. It localises to the cytosol. It carries out the reaction a ribonucleoside 5'-phosphate + H2O = a ribonucleoside + phosphate. The enzyme catalyses a 2'-deoxyribonucleoside + a ribonucleoside 5'-phosphate = a ribonucleoside + a 2'-deoxyribonucleoside 5'-phosphate. It catalyses the reaction IMP + H2O = inosine + phosphate. The catalysed reaction is GMP + H2O = guanosine + phosphate. It carries out the reaction dIMP + H2O = 2'-deoxyinosine + phosphate. The enzyme catalyses dGMP + H2O = 2'-deoxyguanosine + phosphate. It catalyses the reaction XMP + H2O = xanthosine + phosphate. The catalysed reaction is inosine + GMP = guanosine + IMP. It carries out the reaction dGMP + inosine = 2'-deoxyguanosine + IMP. The enzyme catalyses dIMP + inosine = 2'-deoxyinosine + IMP. It catalyses the reaction inosine + UMP = uridine + IMP. The catalysed reaction is inosine + CMP = cytidine + IMP. It carries out the reaction inosine + AMP = IMP + adenosine. With respect to regulation, allosterically activated by various compounds including ATP, 2,3-BPG/2,3-Bisphosphoglyceric acid and Ap4A/P1,P4-bis(5'-adenosyl) tetraphosphate. Binding of an allosteric activator is a prerequisiste to magnesium and substrate binding. Inhibited by inorganic phosphate. In terms of biological role, broad specificity cytosolic 5'-nucleotidase that catalyzes the dephosphorylation of 6-hydroxypurine nucleoside 5'-monophosphates. In addition, possesses a phosphotransferase activity by which it can transfer a phosphate from a donor nucleoside monophosphate to an acceptor nucleoside, preferably inosine, deoxyinosine and guanosine. Has the highest activities for IMP and GMP followed by dIMP, dGMP and XMP. Could also catalyze the transfer of phosphates from pyrimidine monophosphates but with lower efficiency. Through these activities regulates the purine nucleoside/nucleotide pools within the cell. This is Cytosolic purine 5'-nucleotidase from Homo sapiens (Human).